Consider the following 434-residue polypeptide: Angio-associated migratory cell protein (434 aa).

The interval M1–E63 is disordered. Position 20 is a phosphoserine (S20). Over residues D39–E62 the composition is skewed to acidic residues. WD repeat units lie at residues L89–E129, G132–S171, E173–Q212, P214–K254, G258–R299, S315–Q354, Q356–D395, and G398–D433.

In terms of tissue distribution, expressed in metastatic melanoma, liver, skin, kidney, heart, lung, lymph node, skeletal muscle and brain, and also in A2058 melanoma cells and activated T-cells (at protein level). Expressed in blood vessels. Strongly expressed in endothelial cells, cytotrophoblasts, and poorly differentiated. colon adenocarcinoma cells found in lymphatics.

It localises to the cell membrane. Its subcellular location is the cytoplasm. Plays a role in angiogenesis and cell migration. In smooth muscle cell migration, may act through the RhoA pathway. This is Angio-associated migratory cell protein (AAMP) from Homo sapiens (Human).